Reading from the N-terminus, the 101-residue chain is MLSLAHFLVLGAILFAISIVGIFLNRKNVIVLLMAIELMLLAVNINFVAFSHYLGDLAGQVFVFFILTVAAAESAIGLAILVVLFRNLDTINVDDLDTLKG.

Helical transmembrane passes span Leu-4 to Leu-24, Ile-30 to Phe-50, and Val-61 to Leu-81.

The protein belongs to the complex I subunit 4L family. As to quaternary structure, NDH-1 is composed of 14 different subunits. Subunits NuoA, H, J, K, L, M, N constitute the membrane sector of the complex.

The protein localises to the cell inner membrane. It carries out the reaction a quinone + NADH + 5 H(+)(in) = a quinol + NAD(+) + 4 H(+)(out). In terms of biological role, NDH-1 shuttles electrons from NADH, via FMN and iron-sulfur (Fe-S) centers, to quinones in the respiratory chain. The immediate electron acceptor for the enzyme in this species is believed to be ubiquinone. Couples the redox reaction to proton translocation (for every two electrons transferred, four hydrogen ions are translocated across the cytoplasmic membrane), and thus conserves the redox energy in a proton gradient. The polypeptide is NADH-quinone oxidoreductase subunit K (Cupriavidus taiwanensis (strain DSM 17343 / BCRC 17206 / CCUG 44338 / CIP 107171 / LMG 19424 / R1) (Ralstonia taiwanensis (strain LMG 19424))).